The following is a 394-amino-acid chain: Candidapepsin (394 aa).

The N-terminal stretch at methionine 1–glycine 23 is a signal peptide. Residues leucine 24–arginine 60 constitute a propeptide, activation peptide. Asparagine 50 carries N-linked (GlcNAc...) asparagine glycosylation. The Peptidase A1 domain occupies tyrosine 74–alanine 381. Aspartate 92 is a catalytic residue. Cysteine 107 and cysteine 119 are disulfide-bonded. Aspartate 278 is an active-site residue. An intrachain disulfide couples cysteine 314 to cysteine 347.

It belongs to the peptidase A1 family. O-glycosylated.

It is found in the secreted. It carries out the reaction Preferential cleavage at the carboxyl of hydrophobic amino acids, but fails to cleave 15-Leu-|-Tyr-16, 16-Tyr-|-Leu-17 and 24-Phe-|-Phe-25 of insulin B chain. Activates trypsinogen, and degrades keratin.. In Candida tropicalis (Yeast), this protein is Candidapepsin (SAPT1).